The following is a 152-amino-acid chain: MSEKYVVTWDMFQMHSRKLAERLLPASQWKGIIAVSRGGLFPAAVLSRELGIRHVETVCIASYDHDRQGELRVIHAAETDGEGFIVVDDLVDTGNTAKEIRNMYPKAKFVTVFAKPAGAPLVDDYVIDIPQDTWIEQPWDLGLGFVPPIARK.

Residues 37-38 (RG) and 88-96 (DDLVDTGNT) each bind 5-phospho-alpha-D-ribose 1-diphosphate. Residue D89 coordinates Mg(2+). Positions 92 and 135 each coordinate guanine. The xanthine site is built by D92 and I135. Residues 92–96 (DTGNT) and 134–135 (WI) each bind GMP.

It belongs to the purine/pyrimidine phosphoribosyltransferase family. XGPT subfamily. As to quaternary structure, homotetramer. Mg(2+) is required as a cofactor.

Its subcellular location is the cell inner membrane. The catalysed reaction is GMP + diphosphate = guanine + 5-phospho-alpha-D-ribose 1-diphosphate. The enzyme catalyses XMP + diphosphate = xanthine + 5-phospho-alpha-D-ribose 1-diphosphate. It catalyses the reaction IMP + diphosphate = hypoxanthine + 5-phospho-alpha-D-ribose 1-diphosphate. It functions in the pathway purine metabolism; GMP biosynthesis via salvage pathway; GMP from guanine: step 1/1. Its pathway is purine metabolism; XMP biosynthesis via salvage pathway; XMP from xanthine: step 1/1. Functionally, purine salvage pathway enzyme that catalyzes the transfer of the ribosyl-5-phosphate group from 5-phospho-alpha-D-ribose 1-diphosphate (PRPP) to the N9 position of the 6-oxopurines guanine and xanthine to form the corresponding ribonucleotides GMP (guanosine 5'-monophosphate) and XMP (xanthosine 5'-monophosphate), with the release of PPi. To a lesser extent, also acts on hypoxanthine. The protein is Xanthine-guanine phosphoribosyltransferase of Actinobacillus succinogenes (strain ATCC 55618 / DSM 22257 / CCUG 43843 / 130Z).